The primary structure comprises 1088 residues: RNA-directed RNA polymerase (1088 aa).

One can recognise a RdRp catalytic domain in the interval leucine 501–isoleucine 687.

The protein belongs to the reoviridae RNA-directed RNA polymerase family. Interacts with VP3 (Potential). Interacts with VP2; this interaction activates VP1. Interacts with NSP5; this interaction is probably necessary for the formation of functional virus factories. Interacts with NSP2; this interaction is weak. It depends on Mg(2+) as a cofactor.

It is found in the virion. The enzyme catalyses RNA(n) + a ribonucleoside 5'-triphosphate = RNA(n+1) + diphosphate. Its function is as follows. RNA-directed RNA polymerase that is involved in both transcription and genome replication. Together with VP3 capping enzyme, forms an enzyme complex positioned near the channels situated at each of the five-fold vertices of the core. Following infection, the outermost layer of the virus is lost, leaving a double-layered particle (DLP) made up of the core and VP6 shell. VP1 then catalyzes the transcription of fully conservative plus-strand genomic RNAs that are extruded through the DLP's channels into the cytoplasm where they function as mRNAs for translation of viral proteins. One copy of each of the viral (+)RNAs is also recruited during core assembly, together with newly synthesized polymerase complexes and VP2. The polymerase of these novo-formed particles catalyzes the synthesis of complementary minus-strands leading to dsRNA formation. To do so, the polymerase specifically recognizes and binds 4 bases 5'-UGUG-3' in the conserved 3'-sequence of plus-strand RNA templates. VP2 presumably activates the autoinhibited VP1-RNA complex to coordinate packaging and genome replication. Once dsRNA synthesis is complete, the polymerase switches to the transcriptional mode, thus providing secondary transcription. The sequence is that of RNA-directed RNA polymerase from Rotavirus A (strain RVA/SA11-Patton/G3P[X]) (RV-A).